The primary structure comprises 429 residues: Adenylosuccinate synthetase (429 aa).

GTP contacts are provided by residues 12 to 18 (GDEGKGK) and 40 to 42 (GHT). D13 acts as the Proton acceptor in catalysis. D13 and G40 together coordinate Mg(2+). IMP-binding positions include 13-16 (DEGK), 38-41 (NAGH), T129, R143, Q223, T238, and R302. The active-site Proton donor is the H41. Residue 298–304 (TVTGRRR) participates in substrate binding. GTP-binding positions include R304, 330 to 332 (KLD), and 412 to 414 (STS).

Belongs to the adenylosuccinate synthetase family. Homodimer. Mg(2+) serves as cofactor.

It is found in the cytoplasm. The catalysed reaction is IMP + L-aspartate + GTP = N(6)-(1,2-dicarboxyethyl)-AMP + GDP + phosphate + 2 H(+). It participates in purine metabolism; AMP biosynthesis via de novo pathway; AMP from IMP: step 1/2. Plays an important role in the de novo pathway of purine nucleotide biosynthesis. Catalyzes the first committed step in the biosynthesis of AMP from IMP. The protein is Adenylosuccinate synthetase of Granulibacter bethesdensis (strain ATCC BAA-1260 / CGDNIH1).